Consider the following 332-residue polypeptide: Torsin-1A (332 aa).

An N-terminal signal peptide occupies residues 1 to 20 (MKLGRAVLGLLLLAPSVVQA). Positions 91–251 (KPKKPLTLSL…VSVFNNKNSG (161 aa)) are interaction with SNAPIN. 102–109 (GWTGTGKN) contributes to the ATP binding site. N-linked (GlcNAc...) (high mannose) asparagine glycosylation is found at Asn143 and Asn158. Residues 251–332 (GFWHSSLIDR…FTKLDYYYDD (82 aa)) form an interaction with KLC1 region. An interaction with SYNE3 region spans residues 312–332 (RVFSDKGCKTVFTKLDYYYDD).

This sequence belongs to the ClpA/ClpB family. Torsin subfamily. As to quaternary structure, homohexamer. Interacts with TOR1B; the interaction may be specific of neural tissues. Interacts (ATP-bound) with TOR1AIP1 and TOR1AIP2; the interactions induce ATPase activity. Interacts with KLHL14; preferentially when ATP-free. Interacts with KLC1 (via TPR repeats); the interaction associates TOR1A with the kinesin oligomeric complex. Interacts with COPS4; the interaction associates TOR1A with the CSN complex. Interacts with SNAPIN; the interaction is direct and associates SNAPIN with the CSN complex. Interacts with STON2. Interacts (ATP-bound) with SYNE3 (via KASH domain); the interaction is required for SYNE3 nuclear envelope localization. Interacts with VIM; the interaction associates TOR1A with the cytoskeleton. Interacts with PLEC. Interacts (ATP-bound) with SLC6A3; regulates SLC6A3 transport to the plasma membrane. N-glycosylated. In terms of tissue distribution, widely expressed. Highest levels in kidney and liver. In the brain, high levels found in the dopaminergic neurons of the substantia nigra pars compacta, as well as in the neocortex, hippocampus and cerebellum. Also highly expressed in the spinal cord.

It is found in the endoplasmic reticulum lumen. The protein localises to the nucleus membrane. Its subcellular location is the cell projection. It localises to the growth cone. The protein resides in the cytoplasmic vesicle membrane. It is found in the cytoplasmic vesicle. The protein localises to the secretory vesicle. Its subcellular location is the synaptic vesicle. It localises to the cytoplasm. The protein resides in the cytoskeleton. The catalysed reaction is ATP + H2O = ADP + phosphate + H(+). In terms of biological role, protein with chaperone functions important for the control of protein folding, processing, stability and localization as well as for the reduction of misfolded protein aggregates. Involved in the regulation of synaptic vesicle recycling, controls STON2 protein stability in collaboration with the COP9 signalosome complex (CSN). In the nucleus, may link the cytoskeleton with the nuclear envelope, this mechanism seems to be crucial for the control of nuclear polarity, cell movement and, specifically in neurons, nuclear envelope integrity. Participates in the cellular trafficking and may regulate the subcellular location of multipass membrane proteins such as the dopamine transporter SLC6A3, leading to the modulation of dopamine neurotransmission. In the endoplasmic reticulum, plays a role in the quality control of protein folding by increasing clearance of misfolded proteins such as SGCE variants or holding them in an intermediate state for proper refolding. May have a redundant function with TOR1B in non-neural tissues. The protein is Torsin-1A (TOR1A) of Homo sapiens (Human).